Reading from the N-terminus, the 589-residue chain is EZH inhibitory protein (589 aa).

Disordered regions lie at residues 1–46 (MASS…LRLR), 61–548 (AGED…SGPN), and 561–589 (LDSS…KCRG). Gly residues-rich tracts occupy residues 29–38 (GPRGRGGPSG) and 105–114 (PKGGGKADQG). The segment covering 147 to 161 (GAAGPPLPGARGSPA) has biased composition (low complexity). Residues 193 to 204 (LRSSTSQGSGST) show a composition bias toward polar residues. 4 stretches are compositionally biased toward low complexity: residues 299–308 (RSSASAVSPE), 325–334 (RSSASVVSPE), 351–360 (RSSASVVSPE), and 374–390 (PRAT…TTRS). Residue serine 306 is modified to Phosphoserine. The segment covering 426 to 437 (MRLDLQVDREPE) has biased composition (basic and acidic residues). Residues 438–449 (SEAEQEEQELES) are compositionally biased toward acidic residues. Low complexity predominate over residues 450–465 (EPGPSSRPQASRSSSR). Residues 482-490 (RRPVRMRAS) form a sufficient for interaction with EZH2 region. The segment at 484-503 (PVRMRASSPSPPGRLYPLPK) is necessary and sufficient for inhibition of PRC2/EED-EZH1 and PRC2/EED-EZH2 complex activity. Over residues 509-547 (VHSPSSSSSESSSVSSSHSPLNKAPDPGSSPPLSSLSGP) the composition is skewed to low complexity. Over residues 575–589 (AAPHTREEEDKKCRG) the composition is skewed to basic and acidic residues.

Interacts with PRC2/EED-EZH1 complex member EZH1 and with PRC2/EED-EZH2 complex member EZH2; the interaction blocks EZH1/EZH2 methyltransferase activity. Interacts (via C-terminus) with SUZ12 which is a member of the PRC2/EED-EZH1 and PRC2/EED-EZH2 complexes. In terms of tissue distribution, highly expressed in ovary with lower expression in testis and very low levels in other tissues tested including prostate, brain, kidney, spleen and liver. During spermatogenesis, expressed mainly in spermatogonia with very low expression in spermatocytes I and II.

Its subcellular location is the nucleus. It is found in the cytoplasm. In terms of biological role, inhibits PRC2/EED-EZH1 and PRC2/EED-EZH2 complex function by inhibiting EZH1/EZH2 methyltransferase activity, thereby causing down-regulation of histone H3 trimethylation at 'Lys-27' (H3K27me3). Probably inhibits methyltransferase activity by limiting the stimulatory effect of cofactors such as AEBP2 and JARID2. Inhibits H3K27me3 deposition during spermatogenesis and oogenesis. The sequence is that of EZH inhibitory protein from Mus musculus (Mouse).